A 168-amino-acid polypeptide reads, in one-letter code: Large ribosomal subunit protein uL10 (168 aa).

Belongs to the universal ribosomal protein uL10 family. As to quaternary structure, part of the ribosomal stalk of the 50S ribosomal subunit. The N-terminus interacts with L11 and the large rRNA to form the base of the stalk. The C-terminus forms an elongated spine to which L12 dimers bind in a sequential fashion forming a multimeric L10(L12)X complex.

Functionally, forms part of the ribosomal stalk, playing a central role in the interaction of the ribosome with GTP-bound translation factors. The protein is Large ribosomal subunit protein uL10 of Acinetobacter baylyi (strain ATCC 33305 / BD413 / ADP1).